The primary structure comprises 380 residues: Chaperone protein DnaJ (380 aa).

Residues Asp-4–Gly-69 form the J domain. The segment at Gly-135–Asn-213 adopts a CR-type zinc-finger fold. Zn(2+) is bound by residues Cys-148, Cys-151, Cys-165, Cys-168, Cys-187, Cys-190, Cys-201, and Cys-204. CXXCXGXG motif repeat units lie at residues Cys-148–Gly-155, Cys-165–Gly-172, Cys-187–Gly-194, and Cys-201–Arg-208.

It belongs to the DnaJ family. In terms of assembly, homodimer. Zn(2+) serves as cofactor.

It is found in the cytoplasm. Functionally, participates actively in the response to hyperosmotic and heat shock by preventing the aggregation of stress-denatured proteins and by disaggregating proteins, also in an autonomous, DnaK-independent fashion. Unfolded proteins bind initially to DnaJ; upon interaction with the DnaJ-bound protein, DnaK hydrolyzes its bound ATP, resulting in the formation of a stable complex. GrpE releases ADP from DnaK; ATP binding to DnaK triggers the release of the substrate protein, thus completing the reaction cycle. Several rounds of ATP-dependent interactions between DnaJ, DnaK and GrpE are required for fully efficient folding. Also involved, together with DnaK and GrpE, in the DNA replication of plasmids through activation of initiation proteins. The protein is Chaperone protein DnaJ of Bartonella quintana (strain Toulouse) (Rochalimaea quintana).